Here is a 474-residue protein sequence, read N- to C-terminus: Gamma-aminobutyric acid receptor subunit gamma-2 (474 aa).

An N-terminal signal peptide occupies residues 1–38; it reads MSSPNTWSIGSSVYSPVFSQKMTLWILLLLSLYPGFTS. Topologically, residues 39–274 are extracellular; that stretch reads QKSDDDYEDY…FDLSRRMGYF (236 aa). 2 N-linked (GlcNAc...) asparagine glycosylation sites follow: N51 and N128. C189 and C203 form a disulfide bridge. N-linked (GlcNAc...) asparagine glycosylation occurs at N246. Residues 275–295 form a helical membrane-spanning segment; the sequence is TIQTYIPCTLIVVLSWVSFWI. Residues 296–301 lie on the Cytoplasmic side of the membrane; it reads NKDAVP. The helical transmembrane segment at 302–321 threads the bilayer; the sequence is ARTSLGITTVLTMTTLSTIA. Topologically, residues 322 to 333 are extracellular; it reads RKSLPKVSYVTA. Residues 334-358 traverse the membrane as a helical segment; sequence MDLFVSVCFIFVFSALVEYGTLHYF. The Cytoplasmic portion of the chain corresponds to 359-450; sequence VSNRKPSKDK…IHIRIAKMDS (92 aa). The residue at position 381 (S381) is a Phosphoserine; by PKC. The chain crosses the membrane as a helical span at residues 451–472; that stretch reads YARIFFPTAFCLFNLVYWVSYL. Residues 473-474 are Extracellular-facing; sequence YL.

This sequence belongs to the ligand-gated ion channel (TC 1.A.9) family. Gamma-aminobutyric acid receptor (TC 1.A.9.5) subfamily. GABRG2 sub-subfamily. As to quaternary structure, heteropentamer, formed by a combination of alpha (GABRA1-6), beta (GABRB1-3), gamma (GABRG1-3), delta (GABRD), epsilon (GABRE), rho (GABRR1-3), pi (GABRP) and theta (GABRQ) chains, each subunit exhibiting distinct physiological and pharmacological properties. Interacts with GABARAP. Interacts with KIF21B. Identified in a complex of 720 kDa composed of LHFPL4, NLGN2, GABRA1, GABRB2, GABRG2 and GABRB3. Interacts with LHFPL4. Interacts with SHISA7; interaction leads to the regulation of GABA(A) receptor trafficking, channel deactivation kinetics and pharmacology. Glycosylated. In terms of processing, palmitoylated by ZDHHC3/GODZ; required for the accumulation of GABA(A) receptors at the postsynaptic membrane of inhibitory GABAergic synapses. As to expression, expressed in brain neurons (at protein level).

Its subcellular location is the postsynaptic cell membrane. It localises to the cell membrane. The protein localises to the cell projection. It is found in the dendrite. The protein resides in the cytoplasmic vesicle membrane. The enzyme catalyses chloride(in) = chloride(out). Its activity is regulated as follows. Allosterically activated by benzodiazepines. Activated by pentobarbital. Inhibited by the antagonist bicuculline. Inhibited by zinc ions. Potentiated by histamine. Functionally, gamma subunit of the heteropentameric ligand-gated chloride channel gated by gamma-aminobutyric acid (GABA), a major inhibitory neurotransmitter in the brain. GABA-gated chloride channels, also named GABA(A) receptors (GABAAR), consist of five subunits arranged around a central pore and contain GABA active binding site(s) located at the alpha and beta subunit interface(s). When activated by GABA, GABAARs selectively allow the flow of chloride anions across the cell membrane down their electrochemical gradient. Gamma-2/GABRG2-containing GABAARs are found at both synaptic and extrasynaptic sites. Chloride influx into the postsynaptic neuron following GABAAR opening decreases the neuron ability to generate a new action potential, thereby reducing nerve transmission. GABAARs containing alpha-1 and beta-2 or -3 subunits exhibit synaptogenic activity; the gamma-2 subunit being necessary but not sufficient to induce rapid synaptic contacts formation. Extrasynaptic gamma-2-containing receptors contribute to the tonic GABAergic inhibition. GABAARs function also as histamine receptor where histamine binds at the interface of two neighboring beta subunits and potentiates GABA response in a gamma-2 subunit-controlled manner. In Mus musculus (Mouse), this protein is Gamma-aminobutyric acid receptor subunit gamma-2.